A 225-amino-acid chain; its full sequence is Transmembrane protein C16orf54 homolog (225 aa).

Residues Pro-32–Ala-52 traverse the membrane as a helical segment. Disordered regions lie at residues Asp-106–His-163 and Glu-178–Trp-200. Phosphothreonine is present on residues Thr-113 and Thr-117. Low complexity predominate over residues Ala-122–Pro-140. A Phosphoserine modification is found at Ser-195.

It localises to the membrane. The chain is Transmembrane protein C16orf54 homolog from Mus musculus (Mouse).